Here is a 223-residue protein sequence, read N- to C-terminus: GRF1-interacting factor 3 (223 aa).

The segment at 179-223 (ANNAGPNDASGGGKPDGTNMSQSGADGQGGSAARHGGGDAKTEGK) is disordered. The segment covering 214–223 (GGGDAKTEGK) has biased composition (basic and acidic residues).

The protein belongs to the SS18 family. In terms of assembly, interacts with GRF1. In terms of tissue distribution, predominantly expressed in shoot tips containing the shoot apical meristem (SAM) and flower buds. Also expressed in mature flowers.

Functionally, transcription coactivator that plays a role in the regulation of cell expansion in leaf and cotyledons tissues. Component of a network formed by miR396, the GRFs and their interacting factors (GIFs) acting in the regulation of meristem function, at least partially through the control of cell proliferation. GIFs are involved in the positive regulation of cell proliferation of lateral organs in a functionally redundant manner. The chain is GRF1-interacting factor 3 (GIF3) from Arabidopsis thaliana (Mouse-ear cress).